A 75-amino-acid chain; its full sequence is MAYLKKSLFLVLFLGLVSLSICEEEKREEENEEEQEDDDQSEEKRGFLDVITHVGKAVGKAALNAVTEMVNQAEQ.

Residues 1–22 (MAYLKKSLFLVLFLGLVSLSIC) form the signal peptide. Residues 23 to 43 (EEEKREEENEEEQEDDDQSEE) constitute a propeptide that is removed on maturation. The segment at 24 to 44 (EEKREEENEEEQEDDDQSEEK) is disordered. Residues 30 to 41 (ENEEEQEDDDQS) are compositionally biased toward acidic residues.

As to expression, expressed by the skin glands.

It is found in the secreted. In terms of biological role, has antimicrobial activity. The sequence is that of Cruzioseptin-6 from Cruziohyla calcarifer (Splendid leaf frog).